Consider the following 200-residue polypeptide: Signal peptidase complex catalytic subunit SEC11 (200 aa).

Over 1 to 15 the chain is Cytoplasmic; the sequence is MFAELAPYLSNPRQT. A helical; Signal-anchor for type II membrane protein transmembrane segment spans residues 16–33; that stretch reads LAQLLNFALVLSTAFMGW. Topologically, residues 34–200 are lumenal; it reads KALSVYTNSS…MGVMVMLQRE (167 aa). The N-linked (GlcNAc...) asparagine glycan is linked to N41. Residues S53 and H92 each act as charge relay system in the active site. Residues 101-134 are disordered; the sequence is GDGGKKSQRRLEREADKRSGPGLSSPVSHQMLTK. Residues 103–119 are compositionally biased toward basic and acidic residues; the sequence is GGKKSQRRLEREADKRS. The active-site Charge relay system is the D142. The tract at residues 186–197 is C-terminal short (CTS) helix; sequence VLLGIMGVMVML.

It belongs to the peptidase S26B family. As to quaternary structure, component of the signal peptidase complex (SPC) composed of a catalytic subunit SEC11 and three accessory subunits SPC1, SPC2 and SPC3. The complex induces a local thinning of the ER membrane which is used to measure the length of the signal peptide (SP) h-region of protein substrates. This ensures the selectivity of the complex towards h-regions shorter than 18-20 amino acids. SPC associates with the translocon complex.

The protein resides in the endoplasmic reticulum membrane. It carries out the reaction Cleavage of hydrophobic, N-terminal signal or leader sequences from secreted and periplasmic proteins.. Catalytic component of the signal peptidase complex (SPC) which catalyzes the cleavage of N-terminal signal sequences from nascent proteins as they are translocated into the lumen of the endoplasmic reticulum. Specifically cleaves N-terminal signal peptides that contain a hydrophobic alpha-helix (h-region) shorter than 18-20 amino acids. The protein is Signal peptidase complex catalytic subunit SEC11 (SEC11) of Arthroderma benhamiae (strain ATCC MYA-4681 / CBS 112371) (Trichophyton mentagrophytes).